A 128-amino-acid polypeptide reads, in one-letter code: uncharacterized protein (128 aa).

A disulfide bridge connects residues Cys10 and Cys13.

Belongs to the ArsC family.

This is an uncharacterized protein from Ureaplasma parvum serovar 3 (strain ATCC 700970).